The chain runs to 551 residues: Chaperonin GroEL 2 (551 aa).

ATP-binding positions include Thr30–Pro33, Lys51, Asp87–Thr91, Gly415, and Asp496.

This sequence belongs to the chaperonin (HSP60) family. As to quaternary structure, forms a cylinder of 14 subunits composed of two heptameric rings stacked back-to-back. Interacts with the co-chaperonin GroES.

It localises to the cytoplasm. It catalyses the reaction ATP + H2O + a folded polypeptide = ADP + phosphate + an unfolded polypeptide.. Functionally, together with its co-chaperonin GroES, plays an essential role in assisting protein folding. The GroEL-GroES system forms a nano-cage that allows encapsulation of the non-native substrate proteins and provides a physical environment optimized to promote and accelerate protein folding. The chain is Chaperonin GroEL 2 from Rhodopseudomonas palustris (strain BisB18).